Consider the following 118-residue polypeptide: Large ribosomal subunit protein bL20 (118 aa).

The protein belongs to the bacterial ribosomal protein bL20 family.

In terms of biological role, binds directly to 23S ribosomal RNA and is necessary for the in vitro assembly process of the 50S ribosomal subunit. It is not involved in the protein synthesizing functions of that subunit. This is Large ribosomal subunit protein bL20 from Hydrogenovibrio crunogenus (strain DSM 25203 / XCL-2) (Thiomicrospira crunogena).